Consider the following 26-residue polypeptide: DEAD-box ATP-dependent RNA helicase 1 (26 aa).

The Q motif signature appears at 1 to 10 (RELLMGIFEK). Residue 11–16 (NGTGKT) participates in ATP binding. Residues 11-26 (NGTGKTAAFVIPLLQK) enclose the Helicase ATP-binding domain.

This sequence belongs to the DEAD box helicase family. DDX6/DHH1 subfamily.

The protein localises to the cytoplasm. It is found in the P-body. It catalyses the reaction ATP + H2O = ADP + phosphate + H(+). In terms of biological role, ATP-dependent RNA helicase involved in mRNA turnover, and more specifically in mRNA decapping. This Catharanthus roseus (Madagascar periwinkle) protein is DEAD-box ATP-dependent RNA helicase 1.